A 281-amino-acid polypeptide reads, in one-letter code: 4-deoxy-L-threo-5-hexosulose-uronate ketol-isomerase (281 aa).

Zn(2+)-binding residues include histidine 198, histidine 200, glutamate 205, and histidine 248.

The protein belongs to the KduI family. Zn(2+) serves as cofactor.

It catalyses the reaction 5-dehydro-4-deoxy-D-glucuronate = 3-deoxy-D-glycero-2,5-hexodiulosonate. It functions in the pathway glycan metabolism; pectin degradation; 2-dehydro-3-deoxy-D-gluconate from pectin: step 4/5. Catalyzes the isomerization of 5-dehydro-4-deoxy-D-glucuronate to 3-deoxy-D-glycero-2,5-hexodiulosonate. This is 4-deoxy-L-threo-5-hexosulose-uronate ketol-isomerase from Lacticaseibacillus casei (strain BL23) (Lactobacillus casei).